Reading from the N-terminus, the 80-residue chain is Exodeoxyribonuclease 7 small subunit (80 aa).

The protein belongs to the XseB family. As to quaternary structure, heterooligomer composed of large and small subunits.

It is found in the cytoplasm. It catalyses the reaction Exonucleolytic cleavage in either 5'- to 3'- or 3'- to 5'-direction to yield nucleoside 5'-phosphates.. Functionally, bidirectionally degrades single-stranded DNA into large acid-insoluble oligonucleotides, which are then degraded further into small acid-soluble oligonucleotides. The chain is Exodeoxyribonuclease 7 small subunit from Pseudomonas putida (strain ATCC 700007 / DSM 6899 / JCM 31910 / BCRC 17059 / LMG 24140 / F1).